A 583-amino-acid polypeptide reads, in one-letter code: Radixin (583 aa).

The FERM domain maps to 5 to 295 (INVRVTTMDA…GNHELYMRRR (291 aa)). 60-63 (KLNK) contributes to the a 1,2-diacyl-sn-glycero-3-phospho-(1D-myo-inositol) binding site. K83 is modified (N6-succinyllysine). K278 is an a 1,2-diacyl-sn-glycero-3-phospho-(1D-myo-inositol) binding site. Disordered regions lie at residues 310-330 (REEK…KKKR), 376-407 (DQER…AKQA), and 462-526 (ELKT…RVKK). The segment covering 376-400 (DQERKRAKEEAERLEKERRAAEEAK) has biased composition (basic and acidic residues). A compositionally biased stretch (pro residues) spans 469–480 (APPPPPPPPVIP). 2 stretches are compositionally biased toward basic and acidic residues: residues 483–492 (ENEHDEHDEN) and 506–525 (MNHR…ERVK). Residue T564 is modified to Phosphothreonine; by ROCK2.

As to quaternary structure, binds NHERF1. Interacts with NHERF1, NHERF2, LAYN, MME/NEP and ICAM2. Interacts with CPNE1 (via VWFA domain) and CPNE4 (via VWFA domain). Interacts (via FERM domain) with SPN/CD43 cytoplasmic tail. Interacts with CD44. Interacts with CLIC5; may work together in a complex which also includes EZR and MYO6 to stabilize linkages between the plasma membrane and subjacent actin cytoskeleton at the base of stereocilia. Phosphorylated by tyrosine-protein kinases. Phosphorylation by ROCK2 suppresses the head-to-tail association of the N-terminal and C-terminal halves resulting in an opened conformation which is capable of actin and membrane-binding.

The protein resides in the cell membrane. The protein localises to the cytoplasm. It localises to the cytoskeleton. It is found in the cleavage furrow. Its subcellular location is the cell projection. The protein resides in the microvillus. The protein localises to the stereocilium. Its activity is regulated as follows. A head-to-tail association, of the N-terminal and C-terminal halves results in a closed conformation (inactive form) which is incapable of actin or membrane-binding. Probably plays a crucial role in the binding of the barbed end of actin filaments to the plasma membrane. The protein is Radixin (RDX) of Homo sapiens (Human).